Reading from the N-terminus, the 245-residue chain is Phycoerythrobilin:ferredoxin oxidoreductase (245 aa).

This sequence belongs to the HY2 family.

The enzyme catalyses (3Z)-phycoerythrobilin + oxidized 2[4Fe-4S]-[ferredoxin] = 15,16-dihydrobiliverdin + reduced 2[4Fe-4S]-[ferredoxin] + 2 H(+). Functionally, catalyzes the two-electron reduction of the C2 and C3(1) diene system of 15,16-dihydrobiliverdin. This Gloeobacter violaceus (strain ATCC 29082 / PCC 7421) protein is Phycoerythrobilin:ferredoxin oxidoreductase (pebB).